Consider the following 387-residue polypeptide: uncharacterized protein (387 aa).

The segment at 1–23 (MSSLPRNAVARNSKMHKKRDSGV) is disordered. A coiled-coil region spans residues 98–129 (KIARDLKKRQEDYEKTKLEVERLKRSEELANK). A disordered region spans residues 146-255 (ENNTVEPNNE…NKKKKKEKNK (110 aa)). Low complexity-rich tracts occupy residues 162–175 (EQIT…TTEQ) and 182–194 (EQTT…QTAE). The segment covering 204 to 213 (TVEKSGDQST) has biased composition (basic and acidic residues). Over residues 214–231 (EKTTQQTAEESVEQSTEQ) the composition is skewed to polar residues.

This is an uncharacterized protein from Acanthamoeba polyphaga mimivirus (APMV).